The primary structure comprises 294 residues: MHALVPFLLALAWDLTLGEPPAKLHPVVWFGRIAGFIDSRYKRRSPVLDFTAGLLTALVVITFAFLLSIVPFYAPFPLNYFLAAYLLKSSFAIKSLHEHVSRTITDDIEEKRRAVSMIVSRNTKVLDEAHLNSAAIESLAENLNDSVVAPLFYFLLFGLQGAVIYRAVNTLDAMLGYRNERYEFFGKFSARLDDALNFIPARLTVLLYLPLGGRKVPEYYRLARFKINSDKPMAAMSAVLGVWLEKPGVYRFPGKEPKNEDIKRALRIYWLVVTGWVIVVVLLLATGVCPCLSL.

Transmembrane regions (helical) follow at residues 52-72 (AGLL…IVPF), 73-93 (YAPF…SFAI), 145-165 (DSVV…AVIY), and 268-288 (IYWL…ATGV).

The protein belongs to the CobD/CbiB family.

The protein localises to the cell membrane. It participates in cofactor biosynthesis; adenosylcobalamin biosynthesis. In terms of biological role, converts cobyric acid to cobinamide by the addition of aminopropanol on the F carboxylic group. This Thermococcus kodakarensis (strain ATCC BAA-918 / JCM 12380 / KOD1) (Pyrococcus kodakaraensis (strain KOD1)) protein is Probable cobalamin biosynthesis protein CobD.